An 89-amino-acid polypeptide reads, in one-letter code: MLGGLGKLAAEGLAHRTEKATEGAVHAVEEVVSEVVGHAKEVGEKAINDALKKAQESGDRVVKEVTEKVTHTITDAVTHAAEGLGRLGQ.

It belongs to the FAM25 family.

The sequence is that of Protein FAM25A from Mus musculus (Mouse).